A 274-amino-acid polypeptide reads, in one-letter code: 4-hydroxy-3-methylbut-2-enyl diphosphate reductase (274 aa).

Cys12 is a binding site for [4Fe-4S] cluster. Residues His36 and His70 each contribute to the (2E)-4-hydroxy-3-methylbut-2-enyl diphosphate site. Dimethylallyl diphosphate-binding residues include His36 and His70. His36 and His70 together coordinate isopentenyl diphosphate. Cys92 is a binding site for [4Fe-4S] cluster. A (2E)-4-hydroxy-3-methylbut-2-enyl diphosphate-binding site is contributed by His120. His120 lines the dimethylallyl diphosphate pocket. Isopentenyl diphosphate is bound at residue His120. Catalysis depends on Glu122, which acts as the Proton donor. Thr158 contributes to the (2E)-4-hydroxy-3-methylbut-2-enyl diphosphate binding site. Cys186 is a binding site for [4Fe-4S] cluster. (2E)-4-hydroxy-3-methylbut-2-enyl diphosphate-binding residues include Ser214, Ser215, Asn216, and Ser258. Ser214, Ser215, Asn216, and Ser258 together coordinate dimethylallyl diphosphate. Isopentenyl diphosphate-binding residues include Ser214, Ser215, Asn216, and Ser258.

This sequence belongs to the IspH family. [4Fe-4S] cluster serves as cofactor.

The catalysed reaction is isopentenyl diphosphate + 2 oxidized [2Fe-2S]-[ferredoxin] + H2O = (2E)-4-hydroxy-3-methylbut-2-enyl diphosphate + 2 reduced [2Fe-2S]-[ferredoxin] + 2 H(+). It carries out the reaction dimethylallyl diphosphate + 2 oxidized [2Fe-2S]-[ferredoxin] + H2O = (2E)-4-hydroxy-3-methylbut-2-enyl diphosphate + 2 reduced [2Fe-2S]-[ferredoxin] + 2 H(+). It functions in the pathway isoprenoid biosynthesis; dimethylallyl diphosphate biosynthesis; dimethylallyl diphosphate from (2E)-4-hydroxy-3-methylbutenyl diphosphate: step 1/1. The protein operates within isoprenoid biosynthesis; isopentenyl diphosphate biosynthesis via DXP pathway; isopentenyl diphosphate from 1-deoxy-D-xylulose 5-phosphate: step 6/6. Its function is as follows. Catalyzes the conversion of 1-hydroxy-2-methyl-2-(E)-butenyl 4-diphosphate (HMBPP) into a mixture of isopentenyl diphosphate (IPP) and dimethylallyl diphosphate (DMAPP). Acts in the terminal step of the DOXP/MEP pathway for isoprenoid precursor biosynthesis. The chain is 4-hydroxy-3-methylbut-2-enyl diphosphate reductase from Helicobacter pylori (strain Shi470).